Here is a 182-residue protein sequence, read N- to C-terminus: Transcription termination/antitermination protein NusG (182 aa).

A KOW domain is found at G131–S161.

The protein belongs to the NusG family.

Functionally, participates in transcription elongation, termination and antitermination. The protein is Transcription termination/antitermination protein NusG of Vibrio parahaemolyticus serotype O3:K6 (strain RIMD 2210633).